The following is a 660-amino-acid chain: Putative ATP-dependent RNA helicase Pl10 (660 aa).

A compositionally biased stretch (acidic residues) spans 1 to 11 (MSHVAEEDELG). Residues 1–117 (MSHVAEEDEL…SRGGRSGFGK (117 aa)) form a disordered region. N-acetylserine is present on Ser2. Low complexity predominate over residues 12–21 (LDQQLAGLDL). Residues 24-34 (RDSQSGGSTAS) show a composition bias toward polar residues. A compositionally biased stretch (basic and acidic residues) spans 44 to 66 (RNREAAKAFYDKDGSRWSKDKDA). An N6-acetyllysine modification is found at Lys55. Residues Ser80, Ser84, and Ser89 each carry the phosphoserine modification. The span at 93–103 (GRFDERGRSDY) shows a compositional bias: basic and acidic residues. Arg100 carries the omega-N-methylarginine modification. Ser101 bears the Phosphoserine mark. Tyr103 carries the phosphotyrosine modification. Arg109 carries the omega-N-methylarginine modification. N6-acetyllysine is present on Lys117. Residues 179-207 (ESFSDVEMGEIIMGNIELTRYTRPTPVQK) carry the Q motif motif. The residue at position 182 (Ser182) is a Phosphoserine. 199 to 206 (YTRPTPVQ) contacts ATP. Residues 210 to 402 (IPIIKEKRDL…RDFLDEYIFL (193 aa)) enclose the Helicase ATP-binding domain. Residue Lys214 forms a Glycyl lysine isopeptide (Lys-Gly) (interchain with G-Cter in SUMO2) linkage. Residue 223–230 (AQTGSGKT) participates in ATP binding. A DEAD box motif is present at residues 346–349 (DEAD). Positions 413–574 (NITQKVVWVE…EVPSWLENMA (162 aa)) constitute a Helicase C-terminal domain. Ser455 bears the Phosphoserine mark. An Omega-N-methylarginine modification is found at Arg590. Phosphoserine is present on residues Ser592, Ser603, and Ser610. The interval 598 to 632 (RDYRQSSGASSSSFSSGRASNSRSGGGSHGSSRGF) is disordered. Residues 602 to 620 (QSSGASSSSFSSGRASNSR) show a composition bias toward low complexity. Residues Arg615 and Arg630 each carry the omega-N-methylarginine modification. Gly residues predominate over residues 621 to 632 (SGGGSHGSSRGF).

The protein belongs to the DEAD box helicase family. DDX3/DED1 subfamily. In terms of tissue distribution, testis.

The catalysed reaction is ATP + H2O = ADP + phosphate + H(+). In terms of biological role, putative ATP-dependent RNA helicase. Possible role in a key step of the spermatogenic process. This is Putative ATP-dependent RNA helicase Pl10 (D1Pas1) from Mus musculus (Mouse).